A 207-amino-acid chain; its full sequence is Large ribosomal subunit protein uL4 (207 aa).

The protein belongs to the universal ribosomal protein uL4 family. In terms of assembly, part of the 50S ribosomal subunit.

Functionally, one of the primary rRNA binding proteins, this protein initially binds near the 5'-end of the 23S rRNA. It is important during the early stages of 50S assembly. It makes multiple contacts with different domains of the 23S rRNA in the assembled 50S subunit and ribosome. In terms of biological role, forms part of the polypeptide exit tunnel. The protein is Large ribosomal subunit protein uL4 of Geobacter sulfurreducens (strain ATCC 51573 / DSM 12127 / PCA).